The chain runs to 91 residues: Small ribosomal subunit protein uS19 (91 aa).

The protein belongs to the universal ribosomal protein uS19 family.

Its function is as follows. Protein S19 forms a complex with S13 that binds strongly to the 16S ribosomal RNA. The protein is Small ribosomal subunit protein uS19 of Synechococcus sp. (strain RCC307).